Reading from the N-terminus, the 156-residue chain is uncharacterized protein (156 aa).

This is an uncharacterized protein from Saccharolobus islandicus (Sulfolobus islandicus).